The primary structure comprises 1404 residues: DNA-directed RNA polymerase subunit beta' (1404 aa).

Cys-70, Cys-72, Cys-85, and Cys-88 together coordinate Zn(2+). Mg(2+)-binding residues include Asp-460, Asp-462, and Asp-464. Positions 814, 888, 895, and 898 each coordinate Zn(2+).

The protein belongs to the RNA polymerase beta' chain family. In terms of assembly, the RNAP catalytic core consists of 2 alpha, 1 beta, 1 beta' and 1 omega subunit. When a sigma factor is associated with the core the holoenzyme is formed, which can initiate transcription. Mg(2+) serves as cofactor. Requires Zn(2+) as cofactor.

The catalysed reaction is RNA(n) + a ribonucleoside 5'-triphosphate = RNA(n+1) + diphosphate. Its function is as follows. DNA-dependent RNA polymerase catalyzes the transcription of DNA into RNA using the four ribonucleoside triphosphates as substrates. In Shewanella pealeana (strain ATCC 700345 / ANG-SQ1), this protein is DNA-directed RNA polymerase subunit beta'.